Consider the following 486-residue polypeptide: UDP-N-acetylmuramoyl-L-alanyl-D-glutamate--2,6-diaminopimelate ligase (486 aa).

Ser33 is a UDP-N-acetyl-alpha-D-muramoyl-L-alanyl-D-glutamate binding site. An ATP-binding site is contributed by 110–116 (GTNGKTS). Residues 152-153 (TT), Ser179, Gln185, and Arg187 each bind UDP-N-acetyl-alpha-D-muramoyl-L-alanyl-D-glutamate. An N6-carboxylysine modification is found at Lys219. Residues Arg383, 407–410 (DNPR), Gly455, and Glu459 contribute to the meso-2,6-diaminopimelate site. Residues 407–410 (DNPR) carry the Meso-diaminopimelate recognition motif motif.

The protein belongs to the MurCDEF family. MurE subfamily. Mg(2+) serves as cofactor. Carboxylation is probably crucial for Mg(2+) binding and, consequently, for the gamma-phosphate positioning of ATP.

The protein resides in the cytoplasm. The catalysed reaction is UDP-N-acetyl-alpha-D-muramoyl-L-alanyl-D-glutamate + meso-2,6-diaminopimelate + ATP = UDP-N-acetyl-alpha-D-muramoyl-L-alanyl-gamma-D-glutamyl-meso-2,6-diaminopimelate + ADP + phosphate + H(+). It participates in cell wall biogenesis; peptidoglycan biosynthesis. In terms of biological role, catalyzes the addition of meso-diaminopimelic acid to the nucleotide precursor UDP-N-acetylmuramoyl-L-alanyl-D-glutamate (UMAG) in the biosynthesis of bacterial cell-wall peptidoglycan. The chain is UDP-N-acetylmuramoyl-L-alanyl-D-glutamate--2,6-diaminopimelate ligase from Zymomonas mobilis subsp. mobilis (strain ATCC 31821 / ZM4 / CP4).